A 428-amino-acid chain; its full sequence is Dihydroorotase (428 aa).

His59 and His61 together coordinate Zn(2+). Residues 61–63 and Asn93 each bind substrate; that span reads HLR. Zn(2+) is bound by residues Asp151, His178, and His231. Position 277 (Asn277) interacts with substrate. Position 304 (Asp304) interacts with Zn(2+). Asp304 is a catalytic residue. Substrate contacts are provided by residues His308 and 322 to 323; that span reads FG.

Belongs to the metallo-dependent hydrolases superfamily. DHOase family. Class I DHOase subfamily. It depends on Zn(2+) as a cofactor.

It carries out the reaction (S)-dihydroorotate + H2O = N-carbamoyl-L-aspartate + H(+). The protein operates within pyrimidine metabolism; UMP biosynthesis via de novo pathway; (S)-dihydroorotate from bicarbonate: step 3/3. Its function is as follows. Catalyzes the reversible cyclization of carbamoyl aspartate to dihydroorotate. The polypeptide is Dihydroorotase (Bacillus cereus (strain B4264)).